A 146-amino-acid polypeptide reads, in one-letter code: Leghemoglobin alpha (146 aa).

The 144-residue stretch at 3–146 folds into the Globin domain; sequence AFTEKQEALV…LAAAIKKAYA (144 aa). Residues Y26 and Y31 each carry the nitrated tyrosine modification. S46 provides a ligand contact to heme b. S46 is subject to Phosphoserine. O2 is bound at residue H62. 2 residues coordinate heme b: H93 and K96. Y134 carries the nitrated tyrosine modification.

This sequence belongs to the plant globin family. In terms of assembly, monomer. In terms of processing, nitrated mainly at Tyr-31 and, to a lower extent, at Tyr-26 and Tyr-134, in effective nodules and particularly in hypoxic conditions; this mechanism may play a protective role in the symbiosis by buffering toxic peroxynitrite NO(2)(-). Nitration level decrease during nodule senescence. Phosphorylation at Ser-46 disrupts the molecular environment of its porphyrin ring oxygen binding pocket, thus leading to a reduced oxygen consumption and to the delivery of oxygen O(2) to symbiosomes. Root nodules.

It localises to the cytoplasm. It is found in the cytosol. The protein localises to the nucleus. Functionally, leghemoglobin that reversibly binds oxygen O(2) through a pentacoordinated heme iron. In root nodules, facilitates the diffusion of oxygen to the bacteroids while preventing the bacterial nitrogenase from being inactivated by buffering dioxygen, nitric oxide and carbon monoxide, and promoting the formation of reactive oxygen species (ROS, e.g. H(2)O(2)). This role is essential for symbiotic nitrogen fixation (SNF). The polypeptide is Leghemoglobin alpha (Phaseolus vulgaris (Kidney bean)).